We begin with the raw amino-acid sequence, 183 residues long: Large ribosomal subunit protein bL17 (183 aa).

Over residues 130 to 150 the composition is skewed to basic and acidic residues; that stretch reads GTKFAKDEKAKAEATEAKAEE. The interval 130 to 183 is disordered; that stretch reads GTKFAKDEKAKAEATEAKAEETTETTESTEAESTEAPAEEAKAEDTAAEKKDES. Positions 151–162 are enriched in acidic residues; that stretch reads TTETTESTEAES. A compositionally biased stretch (basic and acidic residues) spans 168–183; that stretch reads EEAKAEDTAAEKKDES.

It belongs to the bacterial ribosomal protein bL17 family. As to quaternary structure, part of the 50S ribosomal subunit. Contacts protein L32.

This is Large ribosomal subunit protein bL17 from Saccharopolyspora erythraea (strain ATCC 11635 / DSM 40517 / JCM 4748 / NBRC 13426 / NCIMB 8594 / NRRL 2338).